Here is a 491-residue protein sequence, read N- to C-terminus: MEHPLNIYNTLTRKKEQFIPLHEPHVGMYVCGPTVYGDAHLGHARPAITFDLLFRYLTHLGYKVRYVRNITDVGHLEHDADDGEDKIAKKARLEQLEPMEVVQYYLNRYHQAMDALNVLPPSIEPHASGHIIEQIELVKKILDNGYAYESQGSVYFDVEKYNKDHKYGILSGRNIEDMLNTTRALDGQDEKHNAIDFALWKCAQPEHIMRWPSPWSDGFPGWHCECTAMGKKYLGEHFDIHGGGMDLIFPHHECEIAQAVASQGDDMVHYWMHNNMITINGQKMGKSLGNFITLEQFFTGDHPSLQQAYSAMTIRFFILQAHYRSTVDFSNEALQAAEKGLSRLMEAYGHLMKLQPSATSTVDTKGLREKCFEAMNDDLNSPIVISHLFDATRAINSVKDGKATLSEEDLKELQEVFHLFLFDILGMKDEASASGNHYEAFGKAVDLLLSIRQQAKANKDWATSDKIRNELTAMGFEIKDTKDGAEWKLSK.

Residue Cys-31 participates in Zn(2+) binding. Positions 33 to 43 match the 'HIGH' region motif; sequence PTVYGDAHLGH. Residues Cys-226, His-251, and Glu-255 each contribute to the Zn(2+) site. Residues 283–287 carry the 'KMSKS' region motif; it reads KMGKS. Residue Lys-286 participates in ATP binding.

The protein belongs to the class-I aminoacyl-tRNA synthetase family. In terms of assembly, monomer. Zn(2+) serves as cofactor.

The protein resides in the cytoplasm. The catalysed reaction is tRNA(Cys) + L-cysteine + ATP = L-cysteinyl-tRNA(Cys) + AMP + diphosphate. This chain is Cysteine--tRNA ligase, found in Parabacteroides distasonis (strain ATCC 8503 / DSM 20701 / CIP 104284 / JCM 5825 / NCTC 11152).